A 322-amino-acid polypeptide reads, in one-letter code: Acetyl-coenzyme A carboxylase carboxyl transferase subunit alpha (322 aa).

Residues arginine 39 to glutamine 293 enclose the CoA carboxyltransferase C-terminal domain.

Belongs to the AccA family. Acetyl-CoA carboxylase is a heterohexamer composed of biotin carboxyl carrier protein (AccB), biotin carboxylase (AccC) and two subunits each of ACCase subunit alpha (AccA) and ACCase subunit beta (AccD).

The protein localises to the cytoplasm. The catalysed reaction is N(6)-carboxybiotinyl-L-lysyl-[protein] + acetyl-CoA = N(6)-biotinyl-L-lysyl-[protein] + malonyl-CoA. It participates in lipid metabolism; malonyl-CoA biosynthesis; malonyl-CoA from acetyl-CoA: step 1/1. In terms of biological role, component of the acetyl coenzyme A carboxylase (ACC) complex. First, biotin carboxylase catalyzes the carboxylation of biotin on its carrier protein (BCCP) and then the CO(2) group is transferred by the carboxyltransferase to acetyl-CoA to form malonyl-CoA. This chain is Acetyl-coenzyme A carboxylase carboxyl transferase subunit alpha, found in Ralstonia pickettii (strain 12J).